Reading from the N-terminus, the 293-residue chain is Probable endonuclease 4 (293 aa).

The Zn(2+) site is built by His78, His118, Glu154, Asp188, His191, His225, Asp238, His240, and Glu270.

This sequence belongs to the AP endonuclease 2 family. It depends on Zn(2+) as a cofactor.

It carries out the reaction Endonucleolytic cleavage to 5'-phosphooligonucleotide end-products.. In terms of biological role, endonuclease IV plays a role in DNA repair. It cleaves phosphodiester bonds at apurinic or apyrimidinic (AP) sites, generating a 3'-hydroxyl group and a 5'-terminal sugar phosphate. The chain is Probable endonuclease 4 from Vibrio vulnificus (strain CMCP6).